We begin with the raw amino-acid sequence, 345 residues long: Dihydroorotate dehydrogenase (quinone) (345 aa).

FMN-binding positions include 65 to 69 (AGLDK) and T89. Residue K69 coordinates substrate. Residue 114 to 118 (NRMGF) participates in substrate binding. N146 and N179 together coordinate FMN. N179 lines the substrate pocket. S182 acts as the Nucleophile in catalysis. Substrate is bound at residue N184. K224 and T252 together coordinate FMN. A substrate-binding site is contributed by 253-254 (NT). FMN is bound by residues G275, G304, and 325–326 (YT).

Belongs to the dihydroorotate dehydrogenase family. Type 2 subfamily. Monomer. FMN is required as a cofactor.

The protein resides in the cell membrane. The catalysed reaction is (S)-dihydroorotate + a quinone = orotate + a quinol. It participates in pyrimidine metabolism; UMP biosynthesis via de novo pathway; orotate from (S)-dihydroorotate (quinone route): step 1/1. In terms of biological role, catalyzes the conversion of dihydroorotate to orotate with quinone as electron acceptor. The polypeptide is Dihydroorotate dehydrogenase (quinone) (Janthinobacterium sp. (strain Marseille) (Minibacterium massiliensis)).